A 1464-amino-acid chain; its full sequence is Secretory phospholipase A2 receptor (1464 aa).

The first 22 residues, 1–22 (MLLSPSLLLPLLLLLGAPRGCA), serve as a signal peptide directing secretion. The Extracellular segment spans residues 23–1398 (EGVAAALTPE…ELPEKGPSHS (1376 aa)). In terms of domain architecture, Ricin B-type lectin spans 40–163 (KGIFVIQSES…GSGGGDICEY (124 aa)). 17 disulfides stabilise this stretch: Cys53–Cys66, Cys91–Cys108, Cys180–Cys206, Cys194–Cys221, Cys262–Cys356, Cys332–Cys348, Cys408–Cys503, Cys480–Cys495, Cys619–Cys636, Cys701–Cys798, Cys776–Cys790, Cys842–Cys939, Cys916–Cys931, Cys1069–Cys1089, Cys1211–Cys1225, Cys1282–Cys1378, and Cys1356–Cys1370. Asn95 carries N-linked (GlcNAc...) asparagine glycosylation. A Fibronectin type-II domain is found at 175-223 (AHGMPCMFPFQYNHQWHHECTREGREDDLLWCATTSRYERDEKWGFCPD). C-type lectin domains follow at residues 240 to 357 (NSHI…YVCK), 387 to 504 (YNRN…YVCK), 524 to 645 (HGGF…MSLC), 675 to 799 (GLAS…WICK), 821 to 940 (YQDA…SICK), 967 to 1098 (FNYK…GFVC), 1123 to 1234 (YGNR…GAIC), and 1259 to 1379 (FKSN…FICK). The N-linked (GlcNAc...) asparagine glycan is linked to Asn456. Residues 1399–1419 (IIPLAVVLTLIVIVAICTLSF) traverse the membrane as a helical segment. Residues 1420–1464 (CIYKHNGGFFRRLAGFRNPYYPATNFSTVHLEENILISDLEKSDQ) are Cytoplasmic-facing. The Endocytosis signal motif lies at 1437-1443 (NPYYPAT).

As to quaternary structure, interacts with sPLA2-IB/PLA2G1B; this interaction mediates intracellular signaling as well as clearance of extracellular sPLA2-IB/PLA2G1B via endocytotic pathway. Interacts with sPLA2-X/PLA2G10; this interaction mediates sPLA2-X/PLA2G10 clearance and inactivation. In terms of processing, the secretory phospholipase A2 receptor form may be produced by the action of metalloproteinases. It contains all extracellular domains and only lacks transmembrane and cytosolic regions. It is however unclear whether this form is produced by proteolytic cleavage as suggested by some experiments, or by alternative splicing.

Its subcellular location is the cell membrane. The protein resides in the secreted. Receptor for secretory phospholipase A2 (sPLA2). Also able to bind to snake PA2-like toxins. Although its precise function remains unclear, binding of sPLA2 to its receptor participates in both positive and negative regulation of sPLA2 functions as well as clearance of sPLA2. Binding of sPLA2-IB/PLA2G1B induces various effects depending on the cell type, such as activation of the mitogen-activated protein kinase (MAPK) cascade to induce cell proliferation, the production of lipid mediators, selective release of arachidonic acid in bone marrow-derived mast cells. In neutrophils, binding of sPLA2-IB/PLA2G1B can activate p38 MAPK to stimulate elastase release and cell adhesion. May be involved in responses in pro-inflammatory cytokine productions during endotoxic shock. Also has endocytic properties and rapidly internalizes sPLA2 ligands, which is particularly important for the clearance of extracellular sPLA2s to protect their potent enzymatic activities. The soluble secretory phospholipase A2 receptor form is circulating and acts as a negative regulator of sPLA2 functions by blocking the biological functions of sPLA2-IB/PLA2G1B and sPLA2-X/PLA2G10. The sequence is that of Secretory phospholipase A2 receptor (PLA2R1) from Pongo abelii (Sumatran orangutan).